Consider the following 1401-residue polypeptide: Lysine-specific demethylase 6A (1401 aa).

Residues methionine 1–lysine 1095 form an interaction with SUPT6H region. TPR repeat units lie at residues serine 95–tyrosine 128, alanine 132–phenylalanine 165, lysine 169–threonine 203, alanine 207–serine 240, alanine 245–serine 285, glycine 286–serine 319, aspartate 321–histidine 353, and alanine 355–serine 387. Over residues alanine 439–glycine 453 the composition is skewed to polar residues. Residues alanine 439–glutamine 463 are disordered. 2 positions are modified to omega-N-methylarginine: arginine 519 and arginine 549. 3 stretches are compositionally biased toward polar residues: residues asparagine 596–asparagine 606, histidine 619–glycine 642, and leucine 660–serine 743. The interval asparagine 596–glutamate 745 is disordered. Serine 769 is subject to Phosphoserine. Disordered regions lie at residues glycine 795 to glutamine 863, leucine 914 to proline 941, and phenylalanine 1043 to lysine 1080. Positions serine 814–threonine 833 are enriched in low complexity. A Phosphothreonine modification is found at threonine 827. Serine 829 is modified (phosphoserine). Polar residues predominate over residues glutamate 834–histidine 848. Over residues cysteine 918 to leucine 931 the composition is skewed to pro residues. The segment covering serine 1046 to serine 1063 has biased composition (basic and acidic residues). Residues lysine 1095–tryptophan 1258 form the JmjC domain. The Fe cation site is built by histidine 1146, glutamate 1148, and histidine 1226. 4 residues coordinate Zn(2+): cysteine 1331, cysteine 1334, cysteine 1358, and cysteine 1361.

Belongs to the UTX family. Component of the MLL2/3 complex (also named ASCOM complex), at least composed of KMT2D/MLL2 or KMT2C/MLL3, ASH2L, RBBP5, WDR5, NCOA6, DPY30, KDM6A (or KDM6B), PAXIP1/PTIP, PAGR1 and alpha- and beta-tubulin. Interacts with TLE1. Interacts with SUPT6H. Interacts with SMARCA4. Interacts with PROSER1. Requires L-ascorbate as cofactor. It depends on Fe(2+) as a cofactor. Expressed in brain, heart and spleen.

It localises to the nucleus. It carries out the reaction N(6),N(6),N(6)-trimethyl-L-lysyl(27)-[histone H3] + 2 2-oxoglutarate + 2 O2 = N(6)-methyl-L-lysyl(27)-[histone H3] + 2 formaldehyde + 2 succinate + 2 CO2. Its function is as follows. Histone demethylase that specifically demethylates 'Lys-27' of histone H3, thereby playing a central role in histone code. Demethylates trimethylated and dimethylated but not monomethylated H3 'Lys-27'. Plays a central role in regulation of posterior development, by regulating HOX gene expression. Demethylation of 'Lys-27' of histone H3 is concomitant with methylation of 'Lys-4' of histone H3, and regulates the recruitment of the PRC1 complex and monoubiquitination of histone H2A. Plays a demethylase-independent role in chromatin remodeling to regulate T-box family member-dependent gene expression. The polypeptide is Lysine-specific demethylase 6A (Kdm6a) (Mus musculus (Mouse)).